The primary structure comprises 230 residues: Demethylmenaquinone methyltransferase (230 aa).

S-adenosyl-L-methionine-binding positions include threonine 57, aspartate 77, 101–102 (DI), and serine 118.

It belongs to the class I-like SAM-binding methyltransferase superfamily. MenG/UbiE family.

It carries out the reaction a 2-demethylmenaquinol + S-adenosyl-L-methionine = a menaquinol + S-adenosyl-L-homocysteine + H(+). The protein operates within quinol/quinone metabolism; menaquinone biosynthesis; menaquinol from 1,4-dihydroxy-2-naphthoate: step 2/2. In terms of biological role, methyltransferase required for the conversion of demethylmenaquinol (DMKH2) to menaquinol (MKH2). This chain is Demethylmenaquinone methyltransferase, found in Chlamydia felis (strain Fe/C-56) (Chlamydophila felis).